The primary structure comprises 162 residues: Proepiregulin (162 aa).

Positions methionine 1–alanine 22 are cleaved as a signal peptide. A propeptide spanning residues valine 23–glutamine 55 is cleaved from the precursor. N-linked (GlcNAc...) asparagine glycosylation occurs at asparagine 40. The region spanning leucine 57 to glutamate 97 is the EGF-like domain. Disulfide bonds link cysteine 61–cysteine 74, cysteine 69–cysteine 85, and cysteine 87–cysteine 96. The propeptide at threonine 102–valine 162 is removed in mature form. A helical transmembrane segment spans residues alanine 113 to phenylalanine 133.

In terms of assembly, interacts with EGFR and ERBB4.

The protein localises to the secreted. The protein resides in the extracellular space. It localises to the cell membrane. In terms of biological role, ligand of the EGF receptor/EGFR and ERBB4. Stimulates EGFR and ERBB4 tyrosine phosphorylation. Contributes to inflammation, wound healing, tissue repair, and oocyte maturation by regulating angiogenesis and vascular remodeling and by stimulating cell proliferation. The sequence is that of Proepiregulin (Ereg) from Rattus norvegicus (Rat).